The following is a 336-amino-acid chain: Glyceraldehyde-3-phosphate dehydrogenase (336 aa).

NAD(+) contacts are provided by residues 12 to 13, Asp-34, Arg-78, and Ser-120; that span reads RI. Residues 151 to 153 and Thr-182 contribute to the D-glyceraldehyde 3-phosphate site; that span reads SCT. Cys-152 serves as the catalytic Nucleophile. Asn-183 contributes to the NAD(+) binding site. D-glyceraldehyde 3-phosphate contacts are provided by residues 211-212 and Arg-234; that span reads NG. Asn-316 provides a ligand contact to NAD(+).

This sequence belongs to the glyceraldehyde-3-phosphate dehydrogenase family. As to quaternary structure, homotetramer.

The protein localises to the cytoplasm. The catalysed reaction is D-glyceraldehyde 3-phosphate + phosphate + NAD(+) = (2R)-3-phospho-glyceroyl phosphate + NADH + H(+). The protein operates within carbohydrate degradation; glycolysis; pyruvate from D-glyceraldehyde 3-phosphate: step 1/5. In terms of biological role, catalyzes the oxidative phosphorylation of glyceraldehyde 3-phosphate (G3P) to 1,3-bisphosphoglycerate (BPG) using the cofactor NAD. The first reaction step involves the formation of a hemiacetal intermediate between G3P and a cysteine residue, and this hemiacetal intermediate is then oxidized to a thioester, with concomitant reduction of NAD to NADH. The reduced NADH is then exchanged with the second NAD, and the thioester is attacked by a nucleophilic inorganic phosphate to produce BPG. This is Glyceraldehyde-3-phosphate dehydrogenase (gap) from Heyndrickxia coagulans (Weizmannia coagulans).